Reading from the N-terminus, the 194-residue chain is Glycerol-3-phosphate acyltransferase (194 aa).

Helical transmembrane passes span 4-24 (EIVL…LLLA), 78-98 (EIWV…TVFL), 110-130 (LGVF…IFVF), 137-157 (YVSL…ALIE), and 161-181 (LLIT…RENI).

It belongs to the PlsY family. Probably interacts with PlsX.

The protein localises to the cell inner membrane. The catalysed reaction is an acyl phosphate + sn-glycerol 3-phosphate = a 1-acyl-sn-glycero-3-phosphate + phosphate. Its pathway is lipid metabolism; phospholipid metabolism. Its function is as follows. Catalyzes the transfer of an acyl group from acyl-phosphate (acyl-PO(4)) to glycerol-3-phosphate (G3P) to form lysophosphatidic acid (LPA). This enzyme utilizes acyl-phosphate as fatty acyl donor, but not acyl-CoA or acyl-ACP. In Geotalea daltonii (strain DSM 22248 / JCM 15807 / FRC-32) (Geobacter daltonii), this protein is Glycerol-3-phosphate acyltransferase.